Here is a 468-residue protein sequence, read N- to C-terminus: Argininosuccinate lyase (468 aa).

It belongs to the lyase 1 family. Argininosuccinate lyase subfamily.

Its subcellular location is the cytoplasm. The enzyme catalyses 2-(N(omega)-L-arginino)succinate = fumarate + L-arginine. Its pathway is amino-acid biosynthesis; L-arginine biosynthesis; L-arginine from L-ornithine and carbamoyl phosphate: step 3/3. This chain is Argininosuccinate lyase, found in Zymomonas mobilis subsp. mobilis (strain ATCC 31821 / ZM4 / CP4).